Here is a 419-residue protein sequence, read N- to C-terminus: Tyrosine--tRNA ligase (419 aa).

Tyr-34 lines the L-tyrosine pocket. A 'HIGH' region motif is present at residues 39 to 48 (PTADSLHLGN). L-tyrosine is bound by residues Tyr-169 and Gln-173. Residues 229 to 233 (KFGKS) carry the 'KMSKS' region motif. Residue Lys-232 participates in ATP binding. In terms of domain architecture, S4 RNA-binding spans 353 to 419 (LTLVELLISA…GKKKNFVLTY (67 aa)).

Belongs to the class-I aminoacyl-tRNA synthetase family. TyrS type 1 subfamily. As to quaternary structure, homodimer.

It is found in the cytoplasm. The catalysed reaction is tRNA(Tyr) + L-tyrosine + ATP = L-tyrosyl-tRNA(Tyr) + AMP + diphosphate + H(+). In terms of biological role, catalyzes the attachment of tyrosine to tRNA(Tyr) in a two-step reaction: tyrosine is first activated by ATP to form Tyr-AMP and then transferred to the acceptor end of tRNA(Tyr). The polypeptide is Tyrosine--tRNA ligase (Lactococcus lactis subsp. lactis (strain IL1403) (Streptococcus lactis)).